Reading from the N-terminus, the 73-residue chain is RNA-binding protein Hfq (73 aa).

Positions 8–68 constitute a Sm domain; sequence DQFLNQIRKE…ISTFAPQKNV (61 aa).

The protein belongs to the Hfq family. As to quaternary structure, homohexamer.

In terms of biological role, RNA chaperone that binds small regulatory RNA (sRNAs) and mRNAs to facilitate mRNA translational regulation in response to envelope stress, environmental stress and changes in metabolite concentrations. Also binds with high specificity to tRNAs. In Bacillus licheniformis (strain ATCC 14580 / DSM 13 / JCM 2505 / CCUG 7422 / NBRC 12200 / NCIMB 9375 / NCTC 10341 / NRRL NRS-1264 / Gibson 46), this protein is RNA-binding protein Hfq.